Consider the following 484-residue polypeptide: Ferrochelatase-2, chloroplastic (484 aa).

It belongs to the ferrochelatase family.

The protein localises to the plastid. The protein resides in the chloroplast. It carries out the reaction heme b + 2 H(+) = protoporphyrin IX + Fe(2+). The protein operates within porphyrin-containing compound metabolism; protoheme biosynthesis; protoheme from protoporphyrin-IX: step 1/1. Catalyzes the ferrous insertion into protoporphyrin IX. The polypeptide is Ferrochelatase-2, chloroplastic (HEMH) (Hordeum vulgare (Barley)).